A 448-amino-acid polypeptide reads, in one-letter code: Probable glycine dehydrogenase (decarboxylating) subunit 1 (448 aa).

The protein belongs to the GcvP family. N-terminal subunit subfamily. As to quaternary structure, the glycine cleavage system is composed of four proteins: P, T, L and H. In this organism, the P 'protein' is a heterodimer of two subunits.

The enzyme catalyses N(6)-[(R)-lipoyl]-L-lysyl-[glycine-cleavage complex H protein] + glycine + H(+) = N(6)-[(R)-S(8)-aminomethyldihydrolipoyl]-L-lysyl-[glycine-cleavage complex H protein] + CO2. In terms of biological role, the glycine cleavage system catalyzes the degradation of glycine. The P protein binds the alpha-amino group of glycine through its pyridoxal phosphate cofactor; CO(2) is released and the remaining methylamine moiety is then transferred to the lipoamide cofactor of the H protein. The sequence is that of Probable glycine dehydrogenase (decarboxylating) subunit 1 from Geobacillus sp. (strain WCH70).